Reading from the N-terminus, the 387-residue chain is Probable inactive shikimate kinase like 2, chloroplastic (387 aa).

Residues 1–71 constitute a chloroplast transit peptide; the sequence is MAAFASGLAI…FNSFSCNCLS (71 aa). The tract at residues 368-387 is disordered; it reads NIKPPGWDPSSDTGPHPQFT.

The protein belongs to the shikimate kinase family.

It localises to the plastid. The protein resides in the chloroplast. This is Probable inactive shikimate kinase like 2, chloroplastic (SKL2) from Arabidopsis thaliana (Mouse-ear cress).